The chain runs to 101 residues: Small ribosomal subunit protein uS14 (101 aa).

It belongs to the universal ribosomal protein uS14 family. As to quaternary structure, part of the 30S ribosomal subunit. Contacts proteins S3 and S10.

Binds 16S rRNA, required for the assembly of 30S particles and may also be responsible for determining the conformation of the 16S rRNA at the A site. This chain is Small ribosomal subunit protein uS14, found in Pseudomonas syringae pv. syringae (strain B728a).